The primary structure comprises 65 residues: Conotoxin TsMRCL-04 (65 aa).

Positions 1–20 (MRCLPVFIILLLLIPSAASA) are cleaved as a signal peptide. Residues 21 to 48 (AQPETKDDAALASFYDNAKRTLQRHWAK) constitute a propeptide that is removed on maturation. Residue Glu-63 is modified to Glutamic acid 1-amide.

The protein belongs to the conotoxin T superfamily. In terms of processing, contains 2 disulfide bonds that can be either 'C1-C3, C2-C4' or 'C1-C4, C2-C3', since these disulfide connectivities have been observed for conotoxins with cysteine framework V (for examples, see AC P0DQQ7 and AC P81755). Expressed by the venom duct.

It localises to the secreted. This Conus tessulatus (Tessellate cone) protein is Conotoxin TsMRCL-04.